The following is a 341-amino-acid chain: Outer membrane protein U (341 aa).

The signal sequence occupies residues 1–21 (MNKTLIALAVSAAAVATGAYA).

Belongs to the Gram-negative porin family. As to quaternary structure, homotrimer.

It localises to the cell outer membrane. Its function is as follows. Forms pores that allow passive diffusion of small molecules across the outer membrane. The protein is Outer membrane protein U (ompU) of Vibrio cholerae serotype O1 (strain ATCC 39315 / El Tor Inaba N16961).